A 394-amino-acid chain; its full sequence is Protein maelstrom (394 aa).

The HMG box DNA-binding region spans Ala2–Asn69. A disordered region spans residues Thr44–Ala93. The segment covering Gln73 to Ala93 has biased composition (basic and acidic residues).

The protein belongs to the maelstrom family.

The protein localises to the cytoplasm. The protein resides in the nucleus. Its function is as follows. Involved both in the piRNA and miRNA metabolic processes. As a component of the meiotic nuage, plays a central role during oogenesis by repressing transposable elements and preventing their mobilization, which is essential for the germline integrity. Repression of transposable elements is mediated via the piRNA metabolic process, which mediates the repression of transposable elements during meiosis by forming complexes composed of piRNAs and Piwi proteins and governs the repression of transposons. As a nuclear component, it is required for proper differentiation in the germline stem cell (GSC) lineage by repressing microRNA-7 (miR-7), thereby acting as an indirect regulator of bag-of-marbles (Bam). Acts by binding to the promoter of miR-7 gene and repressing its expression; miR-7 repression alleviates the Bam repression by miR-7, thereby allowing differentiation in the germline stem cell (GSC) lineage. This Drosophila simulans (Fruit fly) protein is Protein maelstrom (mael).